Reading from the N-terminus, the 609-residue chain is Transcription factor ntnD (609 aa).

A DNA-binding region (zn(2)-C6 fungal-type) is located at residues 1–7; it reads MCVGIEC. A disordered region spans residues 46 to 104; sequence FRDQNESSLNRIHNRRTSNSQPSTRSINNTTTIPASNNEPLALSQPPSASSQNQVEKDQ. Residues 51-84 are compositionally biased toward polar residues; it reads ESSLNRIHNRRTSNSQPSTRSINNTTTIPASNNE. Low complexity predominate over residues 85-97; that stretch reads PLALSQPPSASSQ.

It belongs to the TRI10 transcription regulator family.

The protein localises to the nucleus. In terms of biological role, transcription factor; part of the gene cluster that mediates the biosynthesis of meroterpenoids. The protein is Transcription factor ntnD of Nectria sp.